The sequence spans 258 residues: Snake venom serine proteinase 5 (258 aa).

An N-terminal signal peptide occupies residues 1–18 (MVLIRVLANLLILQLSYA). A propeptide spanning residues 19-24 (QKSSEL) is cleaved from the precursor. In terms of domain architecture, Peptidase S1 spans 25–249 (VVGGDECNIN…YNDWIQSIIA (225 aa)). Disulfide bonds link Cys-31–Cys-163, Cys-50–Cys-66, Cys-98–Cys-256, Cys-142–Cys-210, Cys-174–Cys-189, and Cys-200–Cys-225. N-linked (GlcNAc...) asparagine glycosylation is present at Asn-44. Residues His-65 and Asp-110 each act as charge relay system in the active site. Ser-204 functions as the Charge relay system in the catalytic mechanism.

Belongs to the peptidase S1 family. Snake venom subfamily. Monomer. Expressed by the venom gland.

The protein localises to the secreted. Its function is as follows. Snake venom serine protease that may act in the hemostasis system of the prey. The chain is Snake venom serine proteinase 5 from Crotalus adamanteus (Eastern diamondback rattlesnake).